A 790-amino-acid polypeptide reads, in one-letter code: Nuclear cap-binding protein subunit 1 (790 aa).

The segment at 1–26 (MSRRRHSDENDGGQPHKRRKTSDANE) is disordered. The Nuclear localization signal motif lies at 3–20 (RRRHSDENDGGQPHKRRK). Ser-7 is modified (phosphoserine; by RPS6KB1). The residue at position 21 (Thr-21) is a Phosphothreonine; by RPS6KB1. At Ser-22 the chain carries Phosphoserine; by RPS6KB1. The region spanning 28-240 (EDHLESLICK…CLWAQIQKLK (213 aa)) is the MIF4G domain. Ser-201 is modified (phosphoserine). Lys-204 is modified (N6-acetyllysine). The stretch at 643-713 (STIRKMNKHV…SEQKNLFLVI (71 aa)) forms a coiled coil. Lys-684 is covalently cross-linked (Glycyl lysine isopeptide (Lys-Gly) (interchain with G-Cter in SUMO2)). At Lys-698 the chain carries N6-acetyllysine.

Belongs to the NCBP1 family. In terms of assembly, component of the nuclear cap-binding complex (CBC), a heterodimer composed of NCBP1/CBP80 and NCBP2/CBP20 that interacts with m7GpppG-capped RNA. Found in a U snRNA export complex containing PHAX/RNUXA, NCBP1/CBP80, NCBP2/CBP20, RAN, XPO1 and m7G-capped RNA. Identified in a IGF2BP1-dependent mRNP granule complex containing untranslated mRNAs. Interacts with PHAX/RNUXA, SRRT/ARS2, EIF4G2, IGF2BP1, HNRNPF, HNRNPH1, KIAA0427/CTIF, PARN, DROSHA, UPF1 and ALYREF/THOC4. May interact with EIF4G1; the interaction is however controversial since it is reported by PubMed:11340157, PubMed:15059963 and PubMed:15361857, but is not observed by PubMed:19648179. The large PER complex involved in the repression of transcriptional termination is composed of at least PER2, CDK9, DDX5, DHX9, NCBP1/CBP80 and POLR2A. Component of an alternative nuclear cap-binding complex (CBC) composed of NCBP1/CBP80 and NCBP3. Interacts with METTL3. Interacts with ZFC3H1 in a RNase-insensitive manner. Interacts with MTREX. Interacts with TASOR. Interacts with DHX34; the interaction is RNA-dependent. Interacts with KPNA3. Post-translationally, dephosphorylated at Thr-21 by the PNUTS-PP1 complex during RNA polymerase II transcription pause-release.

The protein resides in the nucleus. Its subcellular location is the cytoplasm. Component of the cap-binding complex (CBC), which binds cotranscriptionally to the 5'-cap of pre-mRNAs and is involved in various processes such as pre-mRNA splicing, translation regulation, nonsense-mediated mRNA decay, RNA-mediated gene silencing (RNAi) by microRNAs (miRNAs) and mRNA export. The CBC complex is involved in mRNA export from the nucleus via its interaction with ALYREF/THOC4/ALY, leading to the recruitment of the mRNA export machinery to the 5'-end of mRNA and to mRNA export in a 5' to 3' direction through the nuclear pore. The CBC complex is also involved in mediating U snRNA and intronless mRNAs export from the nucleus. The CBC complex is essential for a pioneer round of mRNA translation, before steady state translation when the CBC complex is replaced by cytoplasmic cap-binding protein eIF4E. The pioneer round of mRNA translation mediated by the CBC complex plays a central role in nonsense-mediated mRNA decay (NMD), NMD only taking place in mRNAs bound to the CBC complex, but not on eIF4E-bound mRNAs. The CBC complex enhances NMD in mRNAs containing at least one exon-junction complex (EJC) via its interaction with UPF1, promoting the interaction between UPF1 and UPF2. The CBC complex is also involved in 'failsafe' NMD, which is independent of the EJC complex, while it does not participate in Staufen-mediated mRNA decay (SMD). During cell proliferation, the CBC complex is also involved in microRNAs (miRNAs) biogenesis via its interaction with SRRT/ARS2 and is required for miRNA-mediated RNA interference. The CBC complex also acts as a negative regulator of PARN, thereby acting as an inhibitor of mRNA deadenylation. In the CBC complex, NCBP1/CBP80 does not bind directly capped RNAs (m7GpppG-capped RNA) but is required to stabilize the movement of the N-terminal loop of NCBP2/CBP20 and lock the CBC into a high affinity cap-binding state with the cap structure. Associates with NCBP3 to form an alternative cap-binding complex (CBC) which plays a key role in mRNA export and is particularly important in cellular stress situations such as virus infections. The conventional CBC with NCBP2 binds both small nuclear RNA (snRNA) and messenger (mRNA) and is involved in their export from the nucleus whereas the alternative CBC with NCBP3 does not bind snRNA and associates only with mRNA thereby playing a role only in mRNA export. NCBP1/CBP80 is required for cell growth and viability. The chain is Nuclear cap-binding protein subunit 1 (NCBP1) from Homo sapiens (Human).